A 358-amino-acid polypeptide reads, in one-letter code: uncharacterized protein (358 aa).

Belongs to the methyltransferase superfamily.

This is an uncharacterized protein from Mycobacterium tuberculosis (strain CDC 1551 / Oshkosh).